The chain runs to 141 residues: Large ribosomal subunit protein uL11 (141 aa).

It belongs to the universal ribosomal protein uL11 family. As to quaternary structure, part of the ribosomal stalk of the 50S ribosomal subunit. Interacts with L10 and the large rRNA to form the base of the stalk. L10 forms an elongated spine to which L12 dimers bind in a sequential fashion forming a multimeric L10(L12)X complex. Post-translationally, one or more lysine residues are methylated.

Forms part of the ribosomal stalk which helps the ribosome interact with GTP-bound translation factors. This is Large ribosomal subunit protein uL11 from Fusobacterium nucleatum subsp. nucleatum (strain ATCC 25586 / DSM 15643 / BCRC 10681 / CIP 101130 / JCM 8532 / KCTC 2640 / LMG 13131 / VPI 4355).